Here is a 448-residue protein sequence, read N- to C-terminus: MTWSTSFLVATSLLSIINSVHAQLTGSVGPLTSVIDKAAVKTCNVCDYGASSDNTTGVGQPIIDAFTDCGSGGLIHVPEGDYLLKDWVSSENGSAWSIQLDGVLHWDSSPSAQSYIFAITGGSDSELSSSNATGAIQGSGYLYHRHNTYTSPRMLYISGVSDWTVHDLVLVNSPMPHFVIDGGYNGEAYNMAICGGDHGGLDGIDLYGGNIWIHLMVTNKDECVTSKTNSHNFLIENIYCNPSGGCAIGSLGSSVNVTNILYRNVYTWDSNQMMMIKTNGGLGNVSNIVFENFIGHGNVNSLDLDSYWSSMNAIDGVGIYYHNITIYNWTGTAIDGETRPPIRVICPEDMPCTEITLVQIDLLVEEGRYDEYYCAIACGGYCLDSATSTLTTYTTTTYGNSASTGYEAPTMADDLATAFGTTASIPTPTTPASFFPGVAPVSAVAGSS.

A signal peptide spans 1–22 (MTWSTSFLVATSLLSIINSVHA). C43 and C69 form a disulfide bridge. 3 N-linked (GlcNAc...) asparagine glycosylation sites follow: N54, N92, and N131. D221 serves as the catalytic Proton donor. A disulfide bridge connects residues C223 and C240. Residues N256 and N284 are each glycosylated (N-linked (GlcNAc...) asparagine). H296 is a catalytic residue. N-linked (GlcNAc...) asparagine glycosylation is found at N323 and N328. Intrachain disulfides connect C346–C352 and C374–C382.

The protein belongs to the glycosyl hydrolase 28 family.

It localises to the secreted. Pectinolytic enzymes consist of four classes of enzymes: pectine lyase, polygalacturonase, pectin methylesterase and rhamnogalacturonase. Hydrolyzes alpha-D-galacturonopyranosyl-(1,2)-alpha-L-rhamnopyranosyl linkages in the backbone of the hairy regions of pectins. The protein is Probable rhamnogalacturonase E (rhgE) of Aspergillus niger (strain ATCC MYA-4892 / CBS 513.88 / FGSC A1513).